The primary structure comprises 77 residues: Acyl carrier protein (77 aa).

One can recognise a Carrier domain in the interval 2 to 77 (SSIDKRIKEI…DAIDYITDHT (76 aa)). An O-(pantetheine 4'-phosphoryl)serine modification is found at Ser37.

Belongs to the acyl carrier protein (ACP) family. Post-translationally, 4'-phosphopantetheine is transferred from CoA to a specific serine of apo-ACP by AcpS. This modification is essential for activity because fatty acids are bound in thioester linkage to the sulfhydryl of the prosthetic group.

The protein resides in the cytoplasm. Its pathway is lipid metabolism; fatty acid biosynthesis. Its function is as follows. Carrier of the growing fatty acid chain in fatty acid biosynthesis. The sequence is that of Acyl carrier protein from Geotalea daltonii (strain DSM 22248 / JCM 15807 / FRC-32) (Geobacter daltonii).